The primary structure comprises 456 residues: GTPase Der (456 aa).

2 EngA-type G domains span residues 4-169 and 178-353; these read PVVA…PSKD and VQLA…DQSR. GTP contacts are provided by residues 10 to 17, 57 to 61, 120 to 123, 184 to 191, 231 to 235, and 296 to 299; these read GRPNVGKS, DTGGL, NKCE, DTAGI, and NKWD. The KH-like domain maps to 354–439; the sequence is RRVTTSVVNE…PIKLFWRGKQ (86 aa).

The protein belongs to the TRAFAC class TrmE-Era-EngA-EngB-Septin-like GTPase superfamily. EngA (Der) GTPase family. In terms of assembly, associates with the 50S ribosomal subunit.

Its function is as follows. GTPase that plays an essential role in the late steps of ribosome biogenesis. This chain is GTPase Der, found in Prochlorococcus marinus (strain NATL2A).